The chain runs to 506 residues: Cobyric acid synthase (506 aa).

The GATase cobBQ-type domain occupies 254 to 453 (DLDIAVIRLP…IHGIFESDSF (200 aa)). The Nucleophile role is filled by C334. Residue H445 is part of the active site.

Belongs to the CobB/CobQ family. CobQ subfamily.

It functions in the pathway cofactor biosynthesis; adenosylcobalamin biosynthesis. Its function is as follows. Catalyzes amidations at positions B, D, E, and G on adenosylcobyrinic A,C-diamide. NH(2) groups are provided by glutamine, and one molecule of ATP is hydrogenolyzed for each amidation. The protein is Cobyric acid synthase of Dehalococcoides mccartyi (strain ATCC BAA-2266 / KCTC 15142 / 195) (Dehalococcoides ethenogenes (strain 195)).